The following is a 106-amino-acid chain: Iron-sulfur cluster assembly protein CyaY (106 aa).

It belongs to the frataxin family.

Its function is as follows. Involved in iron-sulfur (Fe-S) cluster assembly. May act as a regulator of Fe-S biogenesis. This is Iron-sulfur cluster assembly protein CyaY from Photorhabdus laumondii subsp. laumondii (strain DSM 15139 / CIP 105565 / TT01) (Photorhabdus luminescens subsp. laumondii).